Consider the following 459-residue polypeptide: 3-carboxy-cis,cis-muconate cycloisomerase (459 aa).

The protein belongs to the class-II fumarase/aspartase family. In terms of assembly, homotetramer.

The protein resides in the cytoplasm. The enzyme catalyses 2-(carboxymethyl)-5-oxo-2,5-dihydro-2-furoate = 3-carboxy-cis,cis-muconate + H(+). Its pathway is aromatic compound metabolism; beta-ketoadipate pathway; 5-oxo-4,5-dihydro-2-furylacetate from 3-carboxy-cis,cis-muconate: step 1/2. Catalyzes an anti cycloisomerization. This chain is 3-carboxy-cis,cis-muconate cycloisomerase (pcaB), found in Pseudomonas aeruginosa (strain ATCC 15692 / DSM 22644 / CIP 104116 / JCM 14847 / LMG 12228 / 1C / PRS 101 / PAO1).